The chain runs to 353 residues: Paraneoplastic antigen Ma1 homolog (353 aa).

The protein belongs to the PNMA family. Predominantly expressed in testis. Very low levels in the brain, including in the piriform cortex, hippocampus and some subcortical nuclei.

Its subcellular location is the nucleus. It is found in the nucleolus. In Mus musculus (Mouse), this protein is Paraneoplastic antigen Ma1 homolog (Pnma1).